A 434-amino-acid chain; its full sequence is MYSIDSIKYLIHIHIEAEGVVEKTDVVGAIFGQTEGLLGEELDLRDLQRSGRIGRIDVQIVSKHGKTAGECYIASSLDRAETAILAAALETIDRIGPCMAAIRIQNIEDLRAIKRRQIVERAKELLLESFDEVGISTYDILTEVREASRVEKITTIGPERLPAGPAVLESDAIIIVEGRADVLNLLKCGINNTVAVEGTKVPETVIDLSAKKNTTVFVDGDRGGDLILRELLQVADIDFVAFSPRRRSVEDMSRKEIVKSLRNKVPASVLKSHIEKDEPISDLVFEIEAGEEEHSSVSQKEEGNNTTPDVPADLPEEPPKSNIDEAIIPPITTSEQNLVKPENPHTIQEHTQYMKNTGRSRVLAEDAGVIGDYSLQELKAILPKLNDDVAGVIVDAAVDQKFIDQAFAKGLTYVAANAFEGIVRRPAGLRLIPF.

The region spanning Asp-171–Glu-250 is the Toprim domain. Residues Glu-177, Asp-219, and Asp-221 each coordinate Mg(2+). Positions Gly-290 to Pro-319 are disordered. Basic and acidic residues predominate over residues Glu-292 to Gly-303.

It belongs to the archaeal DnaG primase family. As to quaternary structure, forms a ternary complex with MCM helicase and DNA. Requires Mg(2+) as cofactor.

It catalyses the reaction ssDNA + n NTP = ssDNA/pppN(pN)n-1 hybrid + (n-1) diphosphate.. RNA polymerase that catalyzes the synthesis of short RNA molecules used as primers for DNA polymerase during DNA replication. The chain is DNA primase DnaG from Methanocorpusculum labreanum (strain ATCC 43576 / DSM 4855 / Z).